Here is a 561-residue protein sequence, read N- to C-terminus: Lengsin (561 aa).

Disordered stretches follow at residues 1–78 and 91–112; these read MNDE…WHNA and SLPS…TRDN. Positions 26 to 37 are enriched in basic residues; it reads NKLKRTRRKVTK. Residues 50–63 are compositionally biased toward polar residues; that stretch reads MANSREMSRNQTAD. The GS beta-grasp domain occupies 135–229; sequence NHLQFVRFEA…VICDTFTVTG (95 aa). The GS catalytic domain maps to 236 to 561; it reads PRYIAKRQLR…EGNKFLEYFI (326 aa).

The protein belongs to the glutamine synthetase family. As to quaternary structure, dodecamer. Interacts with BFSP2 and VIM. As to expression, expressed in lens.

Its function is as follows. May act as a component of the cytoskeleton or as a chaperone for the reorganization of intermediate filament proteins during terminal differentiation in the lens. Does not seem to have enzymatic activity. The polypeptide is Lengsin (Lgsn) (Rattus norvegicus (Rat)).